The chain runs to 147 residues: Mannitol-specific cryptic phosphotransferase enzyme IIA component (147 aa).

Positions 5–147 constitute a PTS EIIA type-2 domain; the sequence is DYFPESSISV…KQLADIISRG (143 aa). Catalysis depends on histidine 67, which acts as the Tele-phosphohistidine intermediate. Position 67 is a phosphohistidine; by HPr (histidine 67).

Its subcellular location is the cytoplasm. The phosphoenolpyruvate-dependent sugar phosphotransferase system (sugar PTS), a major carbohydrate active transport system, catalyzes the phosphorylation of incoming sugar substrates concomitantly with their translocation across the cell membrane. The enzyme II CmtAB PTS system is involved in D-mannitol transport. In Escherichia coli O157:H7, this protein is Mannitol-specific cryptic phosphotransferase enzyme IIA component (cmtB).